We begin with the raw amino-acid sequence, 437 residues long: Methylenetetrahydrofolate--tRNA-(uracil-5-)-methyltransferase TrmFO (437 aa).

9 to 14 (GGGLAG) is a binding site for FAD.

The protein belongs to the MnmG family. TrmFO subfamily. It depends on FAD as a cofactor.

It localises to the cytoplasm. The enzyme catalyses uridine(54) in tRNA + (6R)-5,10-methylene-5,6,7,8-tetrahydrofolate + NADH + H(+) = 5-methyluridine(54) in tRNA + (6S)-5,6,7,8-tetrahydrofolate + NAD(+). It carries out the reaction uridine(54) in tRNA + (6R)-5,10-methylene-5,6,7,8-tetrahydrofolate + NADPH + H(+) = 5-methyluridine(54) in tRNA + (6S)-5,6,7,8-tetrahydrofolate + NADP(+). Its function is as follows. Catalyzes the folate-dependent formation of 5-methyl-uridine at position 54 (M-5-U54) in all tRNAs. The polypeptide is Methylenetetrahydrofolate--tRNA-(uracil-5-)-methyltransferase TrmFO (Moorella thermoacetica (strain ATCC 39073 / JCM 9320)).